The primary structure comprises 215 residues: Adenylate kinase (215 aa).

Residue 10–15 (GAGKGT) coordinates ATP. Positions 30 to 59 (STGDILRENVKNQTELGKKAKEYMDKGLLV) are NMP. AMP is bound by residues Thr-31, Arg-36, 57 to 59 (LLV), 85 to 88 (GFPR), and Gln-92. The tract at residues 126–163 (GRRICKSCGASFHVVYRPPKKEGICDICGGQLYQREDD) is LID. Residue Arg-127 coordinates ATP. Residues Cys-130 and Cys-133 each coordinate Zn(2+). 136–137 (SF) is a binding site for ATP. Residues Cys-150 and Cys-153 each coordinate Zn(2+). AMP is bound by residues Arg-160 and Arg-171. Glu-199 contacts ATP.

Belongs to the adenylate kinase family. As to quaternary structure, monomer.

It localises to the cytoplasm. The catalysed reaction is AMP + ATP = 2 ADP. The protein operates within purine metabolism; AMP biosynthesis via salvage pathway; AMP from ADP: step 1/1. Catalyzes the reversible transfer of the terminal phosphate group between ATP and AMP. Plays an important role in cellular energy homeostasis and in adenine nucleotide metabolism. This chain is Adenylate kinase, found in Caldicellulosiruptor saccharolyticus (strain ATCC 43494 / DSM 8903 / Tp8T 6331).